A 468-amino-acid chain; its full sequence is Mothers against decapentaplegic homolog 2 (468 aa).

Positions 10-177 (PVVKRLLGWK…YQRVETPVLP (168 aa)) constitute an MH1 domain. 4 residues coordinate Zn(2+): Cys-75, Cys-150, Cys-162, and His-167. Residues 224–254 (PGYISEDGEASDQQMNQSMDTGSPAELSPST) form a disordered region. Residues 234-244 (SDQQMNQSMDT) are compositionally biased toward polar residues. In terms of domain architecture, MH2 spans 275–468 (WCSIAYYELN…SPSVRCSSMS (194 aa)).

It belongs to the dwarfin/SMAD family.

The protein resides in the cytoplasm. It is found in the nucleus. Its function is as follows. Promotes differentiation of dorsal tissues. May be involved in the mediation of Ndr2 signaling during mesoderm and axis formation during embryogenesis. The polypeptide is Mothers against decapentaplegic homolog 2 (smad2) (Danio rerio (Zebrafish)).